The primary structure comprises 140 residues: Transcription antitermination protein NusB (140 aa).

Belongs to the NusB family.

In terms of biological role, involved in transcription antitermination. Required for transcription of ribosomal RNA (rRNA) genes. Binds specifically to the boxA antiterminator sequence of the ribosomal RNA (rrn) operons. The protein is Transcription antitermination protein NusB of Myxococcus xanthus (strain DK1622).